The sequence spans 382 residues: Succinyl-diaminopimelate desuccinylase (382 aa).

His73 lines the Zn(2+) pocket. Asp75 is an active-site residue. Asp106 lines the Zn(2+) pocket. The active-site Proton acceptor is Glu140. 3 residues coordinate Zn(2+): Glu141, Glu169, and His355.

Belongs to the peptidase M20A family. DapE subfamily. In terms of assembly, homodimer. Zn(2+) serves as cofactor. Co(2+) is required as a cofactor.

It catalyses the reaction N-succinyl-(2S,6S)-2,6-diaminopimelate + H2O = (2S,6S)-2,6-diaminopimelate + succinate. Its pathway is amino-acid biosynthesis; L-lysine biosynthesis via DAP pathway; LL-2,6-diaminopimelate from (S)-tetrahydrodipicolinate (succinylase route): step 3/3. In terms of biological role, catalyzes the hydrolysis of N-succinyl-L,L-diaminopimelic acid (SDAP), forming succinate and LL-2,6-diaminopimelate (DAP), an intermediate involved in the bacterial biosynthesis of lysine and meso-diaminopimelic acid, an essential component of bacterial cell walls. The protein is Succinyl-diaminopimelate desuccinylase of Cellvibrio japonicus (strain Ueda107) (Pseudomonas fluorescens subsp. cellulosa).